A 228-amino-acid chain; its full sequence is Urease accessory protein UreF 1 (228 aa).

The protein belongs to the UreF family. In terms of assembly, ureD, UreF and UreG form a complex that acts as a GTP-hydrolysis-dependent molecular chaperone, activating the urease apoprotein by helping to assemble the nickel containing metallocenter of UreC. The UreE protein probably delivers the nickel.

It is found in the cytoplasm. In terms of biological role, required for maturation of urease via the functional incorporation of the urease nickel metallocenter. Functionally, disruption of the ure1 gene cluster suggests that it protects brucellae during their passage through the stomach. The major route of infection in human brucellosis is oral. The sequence is that of Urease accessory protein UreF 1 from Brucella abortus (strain 2308).